We begin with the raw amino-acid sequence, 85 residues long: Small ribosomal subunit protein bS16 (85 aa).

This sequence belongs to the bacterial ribosomal protein bS16 family.

The sequence is that of Small ribosomal subunit protein bS16 from Nitrosomonas eutropha (strain DSM 101675 / C91 / Nm57).